The primary structure comprises 369 residues: Uroporphyrinogen decarboxylase (369 aa).

The segment at 1–26 (MPVLHVDARPGSGPGGVSPPPSGAAL) is disordered. Residues 56 to 60 (RQAGR), D105, Y180, S235, and H348 each bind substrate.

Belongs to the uroporphyrinogen decarboxylase family. As to quaternary structure, homodimer.

The protein localises to the cytoplasm. It carries out the reaction uroporphyrinogen III + 4 H(+) = coproporphyrinogen III + 4 CO2. It participates in porphyrin-containing compound metabolism; protoporphyrin-IX biosynthesis; coproporphyrinogen-III from 5-aminolevulinate: step 4/4. Functionally, catalyzes the decarboxylation of four acetate groups of uroporphyrinogen-III to yield coproporphyrinogen-III. This chain is Uroporphyrinogen decarboxylase, found in Frankia casuarinae (strain DSM 45818 / CECT 9043 / HFP020203 / CcI3).